Reading from the N-terminus, the 163-residue chain is Photosystem II extrinsic protein V (163 aa).

The N-terminal stretch at Met-1–Ala-26 is a signal peptide. 2 residues coordinate heme c: His-67 and His-118.

Belongs to the cytochrome c family. PsbV subfamily. As to quaternary structure, PSII is composed of 1 copy each of membrane proteins PsbA, PsbB, PsbC, PsbD, PsbE, PsbF, PsbH, PsbI, PsbJ, PsbK, PsbL, PsbM, PsbT, PsbX, PsbY, PsbZ, Psb30/Ycf12, peripheral proteins PsbO, CyanoQ (PsbQ), PsbU, PsbV and a large number of cofactors. It forms dimeric complexes. It depends on heme c as a cofactor.

It localises to the cellular thylakoid membrane. In terms of biological role, one of the extrinsic, lumenal subunits of photosystem II (PSII). PSII is a light-driven water plastoquinone oxidoreductase, using light energy to abstract electrons from H(2)O, generating a proton gradient subsequently used for ATP formation. The extrinsic proteins stabilize the structure of photosystem II oxygen-evolving complex (OEC), the ion environment of oxygen evolution and protect the OEC against heat-induced inactivation. Low-potential cytochrome c that plays a role in the OEC of PSII. This Thermosynechococcus vestitus (strain NIES-2133 / IAM M-273 / BP-1) protein is Photosystem II extrinsic protein V.